The chain runs to 528 residues: DNA damage-binding protein cmr1 (528 aa).

Disordered stretches follow at residues 32 to 98 and 217 to 243; these read AQSS…QYEA and DASQ…DPDP. Over residues 52–62 the composition is skewed to basic residues; it reads KPKKKPPPKKV. The stretch at 185–226 is one WD 1 repeat; that stretch reads LTPERIYTMTFHPSEAKPLIFAGDKMGNLGVLDASQEKPTSA. Residues 230 to 242 are compositionally biased toward acidic residues; that stretch reads EDDEEDAEDDDPD. 6 WD repeats span residues 250 to 290, 297 to 337, 342 to 382, 389 to 428, 451 to 494, and 497 to 528; these read PHTR…SVEK, SDDI…RSAV, LSEK…HDDP, VSRL…AAWE, GRWV…LAQL, and DGIT…CLWM.

Belongs to the WD repeat DDB2/WDR76 family.

In terms of biological role, DNA-binding protein that binds to both single- and double-stranded DNA. Binds preferentially to UV-damaged DNA. May be involved in DNA-metabolic processes. The polypeptide is DNA damage-binding protein cmr1 (Aspergillus fumigatus (strain CBS 144.89 / FGSC A1163 / CEA10) (Neosartorya fumigata)).